A 577-amino-acid chain; its full sequence is Arginine--tRNA ligase (577 aa).

The short motif at 122-132 (PNVAKEMHVGH) is the 'HIGH' region element.

Belongs to the class-I aminoacyl-tRNA synthetase family. As to quaternary structure, monomer.

The protein resides in the cytoplasm. It catalyses the reaction tRNA(Arg) + L-arginine + ATP = L-arginyl-tRNA(Arg) + AMP + diphosphate. The polypeptide is Arginine--tRNA ligase (Escherichia coli (strain K12 / MC4100 / BW2952)).